The chain runs to 189 residues: Ribosome-recycling factor (189 aa).

Belongs to the RRF family.

Its subcellular location is the cytoplasm. Functionally, responsible for the release of ribosomes from messenger RNA at the termination of protein biosynthesis. May increase the efficiency of translation by recycling ribosomes from one round of translation to another. The sequence is that of Ribosome-recycling factor from Salinibacter ruber (strain DSM 13855 / M31).